The following is a 401-amino-acid chain: Elongation factor Tu (401 aa).

Residues 10–211 (KPHLNVGTIG…ALDTFVPNPK (202 aa)) form the tr-type G domain. Positions 19-26 (GHVDHGKT) are G1. 19-26 (GHVDHGKT) provides a ligand contact to GTP. Residue T26 participates in Mg(2+) binding. A G2 region spans residues 62–66 (GITIA). The segment at 83–86 (DCPG) is G3. Residues 83–87 (DCPGH) and 138–141 (NKAD) each bind GTP. Residues 138-141 (NKAD) form a G4 region. The tract at residues 179–181 (SAV) is G5.

This sequence belongs to the TRAFAC class translation factor GTPase superfamily. Classic translation factor GTPase family. EF-Tu/EF-1A subfamily. As to quaternary structure, monomer.

The protein localises to the cytoplasm. The enzyme catalyses GTP + H2O = GDP + phosphate + H(+). Functionally, GTP hydrolase that promotes the GTP-dependent binding of aminoacyl-tRNA to the A-site of ribosomes during protein biosynthesis. The protein is Elongation factor Tu of Leptospira borgpetersenii serovar Hardjo-bovis (strain JB197).